Reading from the N-terminus, the 174-residue chain is MKILITGRPGVGKTTLIKKLSRLLQNAGGFYTEEMREGEKRIGFKIITLDGEEGILARTDLPSPYRVGKYYVNLKDLEEIGVRSLERAFQEKDLIIVDEIGKMELLSRKFREVVEKIFDSEKDVIATIKKSSDPFVEKIKNRNDVVIFELNEKNRNSLLNEILSVLKFNRGEKQ.

ATP contacts are provided by residues 7 to 14 and 94 to 101; these read GRPGVGKT and LIIVDEIG.

Belongs to the THEP1 NTPase family.

The catalysed reaction is a ribonucleoside 5'-triphosphate + H2O = a ribonucleoside 5'-diphosphate + phosphate + H(+). Functionally, has nucleotide phosphatase activity towards ATP, GTP, CTP, TTP and UTP. May hydrolyze nucleoside diphosphates with lower efficiency. The chain is Nucleoside-triphosphatase THEP1 from Thermotoga maritima (strain ATCC 43589 / DSM 3109 / JCM 10099 / NBRC 100826 / MSB8).